The sequence spans 497 residues: 3-ketoacyl-CoA synthase 6 (497 aa).

2 helical membrane passes run 25 to 45 (LVNH…AVEL) and 64 to 84 (LVQV…YFMS). The FAE domain occupies 81 to 370 (YFMSKPRTIY…FLTSLIGRKI (290 aa)). Residues cysteine 225, histidine 304, histidine 388, histidine 392, histidine 421, and asparagine 425 contribute to the active site.

Belongs to the thiolase-like superfamily. Chalcone/stilbene synthases family. As to expression, in epidermal cells of aerial tissues and in the tapetum of anthers near maturity. Expressed in siliques, flowers and leaves.

It localises to the endoplasmic reticulum membrane. It carries out the reaction a very-long-chain acyl-CoA + malonyl-CoA + H(+) = a very-long-chain 3-oxoacyl-CoA + CO2 + CoA. The protein operates within lipid metabolism; fatty acid biosynthesis. Strongly inhibited by metazachlor and mefluidide. In terms of biological role, contributes to cuticular wax and suberin biosynthesis. Involved in both decarbonylation and acyl-reduction wax synthesis pathways. Required for elongation of C24 fatty acids, an essential step of the cuticular wax production. Major condensing enzyme for stem wax and pollen coat lipid biosynthesis. In Arabidopsis thaliana (Mouse-ear cress), this protein is 3-ketoacyl-CoA synthase 6.